The following is a 164-amino-acid chain: Putative anionic 4-hydroxy-benzoate permease (164 aa).

Residues 1-30 are disordered; that stretch reads CGRRRGSLAWPDASSPSANPRPGAGAAESS. Transmembrane regions (helical) follow at residues 62–82, 97–117, and 126–146; these read LWVACFGFGTGACIILALMFM, GMAQCVGYLLAAFGPPLVGGL, and PALTVCLVLSLTMAAAGMLAG.

Belongs to the major facilitator superfamily. Cyanate porter (TC 2.A.1.17) family.

The protein resides in the cell membrane. May be involved in uptake of anionic 4-hydroxy-benzoate. The chain is Putative anionic 4-hydroxy-benzoate permease from Thauera aromatica.